The following is a 373-amino-acid chain: tRNA-specific 2-thiouridylase MnmA (373 aa).

ATP is bound by residues 12–19 and Met38; that span reads GMSGGVDS. Residues 98–100 form an interaction with target base in tRNA region; that stretch reads NPD. Cys103 (nucleophile) is an active-site residue. A disulfide bond links Cys103 and Cys200. Gly127 lines the ATP pocket. Residues 150-152 form an interaction with tRNA region; the sequence is KDQ. Cys200 acts as the Cysteine persulfide intermediate in catalysis. The interval 312–313 is interaction with tRNA; it reads RY.

It belongs to the MnmA/TRMU family.

It is found in the cytoplasm. It catalyses the reaction S-sulfanyl-L-cysteinyl-[protein] + uridine(34) in tRNA + AH2 + ATP = 2-thiouridine(34) in tRNA + L-cysteinyl-[protein] + A + AMP + diphosphate + H(+). In terms of biological role, catalyzes the 2-thiolation of uridine at the wobble position (U34) of tRNA, leading to the formation of s(2)U34. This Streptococcus pneumoniae (strain ATCC BAA-255 / R6) protein is tRNA-specific 2-thiouridylase MnmA.